A 194-amino-acid polypeptide reads, in one-letter code: Adenylate kinase (194 aa).

An ATP-binding site is contributed by 10-15 (GAGKGT). The interval 30–59 (STGDMLRAAVAQQSEIGKRAKAVMDAGQLV) is NMP. AMP is bound by residues threonine 31, arginine 36, 57–59 (QLV), 85–88 (GYPR), and glutamine 92. The interval 126–142 (SRVAETIAKGGQVRSDD) is LID. Arginine 127 contributes to the ATP binding site. Residues arginine 139 and arginine 150 each coordinate AMP. Residue alanine 178 coordinates ATP.

The protein belongs to the adenylate kinase family. As to quaternary structure, monomer.

Its subcellular location is the cytoplasm. It catalyses the reaction AMP + ATP = 2 ADP. The protein operates within purine metabolism; AMP biosynthesis via salvage pathway; AMP from ADP: step 1/1. Catalyzes the reversible transfer of the terminal phosphate group between ATP and AMP. Plays an important role in cellular energy homeostasis and in adenine nucleotide metabolism. The polypeptide is Adenylate kinase (Brucella abortus (strain S19)).